A 389-amino-acid polypeptide reads, in one-letter code: S-adenosylmethionine synthase (389 aa).

His-17 lines the ATP pocket. A Mg(2+)-binding site is contributed by Asp-19. Glu-45 serves as a coordination point for K(+). L-methionine is bound by residues Glu-58 and Gln-101. Residues 101–111 form a flexible loop region; the sequence is QSPDIAQGVTE. Residues 168–170, 234–235, Asp-243, 249–250, Ala-266, and Lys-270 contribute to the ATP site; these read DSK, RF, and RK. Asp-243 is a binding site for L-methionine. Lys-274 serves as a coordination point for L-methionine.

It belongs to the AdoMet synthase family. In terms of assembly, homotetramer; dimer of dimers. Requires Mg(2+) as cofactor. It depends on K(+) as a cofactor.

Its subcellular location is the cytoplasm. It catalyses the reaction L-methionine + ATP + H2O = S-adenosyl-L-methionine + phosphate + diphosphate. It participates in amino-acid biosynthesis; S-adenosyl-L-methionine biosynthesis; S-adenosyl-L-methionine from L-methionine: step 1/1. In terms of biological role, catalyzes the formation of S-adenosylmethionine (AdoMet) from methionine and ATP. The overall synthetic reaction is composed of two sequential steps, AdoMet formation and the subsequent tripolyphosphate hydrolysis which occurs prior to release of AdoMet from the enzyme. The chain is S-adenosylmethionine synthase from Geotalea uraniireducens (strain Rf4) (Geobacter uraniireducens).